The sequence spans 430 residues: Enolase (430 aa).

Residue Gln-167 participates in (2R)-2-phosphoglycerate binding. Glu-209 acts as the Proton donor in catalysis. Mg(2+) contacts are provided by Asp-245, Glu-286, and Asp-313. 4 residues coordinate (2R)-2-phosphoglycerate: Lys-338, Arg-367, Ser-368, and Lys-389. Lys-338 functions as the Proton acceptor in the catalytic mechanism.

It belongs to the enolase family. Requires Mg(2+) as cofactor.

Its subcellular location is the cytoplasm. It is found in the secreted. The protein localises to the cell surface. The enzyme catalyses (2R)-2-phosphoglycerate = phosphoenolpyruvate + H2O. Its pathway is carbohydrate degradation; glycolysis; pyruvate from D-glyceraldehyde 3-phosphate: step 4/5. Functionally, catalyzes the reversible conversion of 2-phosphoglycerate (2-PG) into phosphoenolpyruvate (PEP). It is essential for the degradation of carbohydrates via glycolysis. In Synechococcus sp. (strain CC9902), this protein is Enolase.